A 144-amino-acid polypeptide reads, in one-letter code: Large ribosomal subunit protein uL16 (144 aa).

It belongs to the universal ribosomal protein uL16 family. As to quaternary structure, part of the 50S ribosomal subunit.

In terms of biological role, binds 23S rRNA and is also seen to make contacts with the A and possibly P site tRNAs. The polypeptide is Large ribosomal subunit protein uL16 (Halalkalibacterium halodurans (strain ATCC BAA-125 / DSM 18197 / FERM 7344 / JCM 9153 / C-125) (Bacillus halodurans)).